The primary structure comprises 113 residues: Ig kappa chain V-II region 26-10 (113 aa).

Positions 1–23 (DVVMTQTPLSLPVSLGDQASISC) are framework-1. A disulfide bond links C23 and C93. The interval 24–39 (RSSQSLVHSNGNTYLN) is complementarity-determining-1. The interval 40–54 (WYLQKAGQSPKLLIY) is framework-2. Residues 55–61 (KVSNRFS) are complementarity-determining-2. A framework-3 region spans residues 62-93 (GVPDRFSGSGSGTDFTLKISRVEAEDLGIYFC). The segment at 94–102 (SQTTHVPPT) is complementarity-determining-3. The tract at residues 103–112 (FGGGTKLEIK) is framework-4.

This chain is Ig kappa chain V-II region 26-10, found in Mus musculus (Mouse).